The chain runs to 572 residues: Dihydroxy-acid dehydratase (572 aa).

Residue cysteine 54 coordinates [2Fe-2S] cluster. A Mg(2+)-binding site is contributed by aspartate 86. Cysteine 127 contributes to the [2Fe-2S] cluster binding site. Aspartate 128 and lysine 129 together coordinate Mg(2+). Lysine 129 is subject to N6-carboxylysine. Residue cysteine 199 participates in [2Fe-2S] cluster binding. Residue glutamate 449 coordinates Mg(2+). Catalysis depends on serine 475, which acts as the Proton acceptor.

The protein belongs to the IlvD/Edd family. As to quaternary structure, homodimer. The cofactor is [2Fe-2S] cluster. Requires Mg(2+) as cofactor.

The catalysed reaction is (2R)-2,3-dihydroxy-3-methylbutanoate = 3-methyl-2-oxobutanoate + H2O. It catalyses the reaction (2R,3R)-2,3-dihydroxy-3-methylpentanoate = (S)-3-methyl-2-oxopentanoate + H2O. It participates in amino-acid biosynthesis; L-isoleucine biosynthesis; L-isoleucine from 2-oxobutanoate: step 3/4. It functions in the pathway amino-acid biosynthesis; L-valine biosynthesis; L-valine from pyruvate: step 3/4. Functionally, functions in the biosynthesis of branched-chain amino acids. Catalyzes the dehydration of (2R,3R)-2,3-dihydroxy-3-methylpentanoate (2,3-dihydroxy-3-methylvalerate) into 2-oxo-3-methylpentanoate (2-oxo-3-methylvalerate) and of (2R)-2,3-dihydroxy-3-methylbutanoate (2,3-dihydroxyisovalerate) into 2-oxo-3-methylbutanoate (2-oxoisovalerate), the penultimate precursor to L-isoleucine and L-valine, respectively. This Pelagibacter ubique (strain HTCC1062) protein is Dihydroxy-acid dehydratase.